Consider the following 530-residue polypeptide: Type 2 DNA topoisomerase 6 subunit B (530 aa).

ATP is bound by residues Asn42, Asp76, 97–98, 106–113, and Lys427; these read SK and GMYGLGVK.

It belongs to the TOP6B family. In terms of assembly, homodimer. Heterotetramer of two Top6A and two Top6B chains.

The enzyme catalyses ATP-dependent breakage, passage and rejoining of double-stranded DNA.. In terms of biological role, relaxes both positive and negative superturns and exhibits a strong decatenase activity. This is Type 2 DNA topoisomerase 6 subunit B from Saccharolobus islandicus (strain M.16.4 / Kamchatka #3) (Sulfolobus islandicus).